Reading from the N-terminus, the 997-residue chain is Protein Smaug (997 aa).

A compositionally biased stretch (polar residues) spans 1 to 37 (MKYATGTDNAMTSGISGQTNNSNSASTEMQPTTSTPT). Disordered stretches follow at residues 1–69 (MKYA…QSQP) and 329–370 (LCPA…GSSS). 2 stretches are compositionally biased toward low complexity: residues 44-69 (TPTA…QSQP) and 329-338 (LCPASGSRSS). Residues serine 564 and serine 575 each carry the phosphoserine modification. The segment at 583–763 (EFKPNYIKFH…KDLKFKLSKM (181 aa)) is interaction with cup. Residues 600–654 (GIGLWLKSLRLHKYIELFKNMTYEEMLLITEDFLQSVGVTKGASHKLALCIEKLK) form the SAM domain. Disordered stretches follow at residues 773-892 (HVKP…MQQM) and 944-972 (GSSD…TSAE). 2 stretches are compositionally biased toward polar residues: residues 802–822 (NGSN…NFSL) and 854–864 (HQPQYKSSSYP). Position 970 is a phosphoserine (serine 970).

It belongs to the SMAUG family. Interacts with oskar (osk). Binds to the 3'-UTR of nos. Interacts with cup, which in turn recruits eIF4-E, leading to an indirect interaction between smg and eIF4-E that prevents mRNA translation.

It localises to the cytoplasm. Its function is as follows. Translation regulator that binds to the 3'-UTR of specific mRNAs such as nanos (nos) and prevent their translation. Prevents translation of unlocalized nos in the bulk cytoplasm via the recruitment of cup. This Drosophila erecta (Fruit fly) protein is Protein Smaug.